The chain runs to 286 residues: Translocon-associated protein subunit alpha (286 aa).

An N-terminal signal peptide occupies residues 1–20 (MSSLRRLLLLLLLVFPATLL). Residues 21-207 (LRVGPGGSLA…EREDGLDGET (187 aa)) lie on the Lumenal side of the membrane. Over residues 37-75 (EDEETVEDSIIEDEDDEAEVEEDEPTDLAEDKEEDDVSG) the composition is skewed to acidic residues. The segment at 37–83 (EDEETVEDSIIEDEDDEAEVEEDEPTDLAEDKEEDDVSGEPEASPSA) is disordered. Asparagine 136 and asparagine 191 each carry an N-linked (GlcNAc...) asparagine glycan. A helical membrane pass occupies residues 208-228 (IFMYMFLAGLGLLVVVGLHQL). Topologically, residues 229 to 286 (LESRKRKRPIQKVEMGTSSQNDVDMSWIPQETLNQINKASPRRLPRKRAQKRSVGSDE) are cytoplasmic. Residue serine 247 is modified to Phosphoserine. At threonine 260 the chain carries Phosphothreonine. Residues 261 to 286 (LNQINKASPRRLPRKRAQKRSVGSDE) form a disordered region. At serine 268 the chain carries Phosphoserine. The span at 268 to 279 (SPRRLPRKRAQK) shows a compositional bias: basic residues.

It belongs to the TRAP-alpha family. In terms of assembly, heterotetramer of TRAP-alpha, TRAP-beta, TRAP-delta and TRAP-gamma. Interacts with palmitoylated calnexin (CALX), the interaction is required for efficient folding of glycosylated proteins. Post-translationally, phosphorylated in its cytoplasmic tail.

It is found in the endoplasmic reticulum membrane. Its function is as follows. TRAP proteins are part of a complex whose function is to bind calcium to the ER membrane and thereby regulate the retention of ER resident proteins. May be involved in the recycling of the translocation apparatus after completion of the translocation process or may function as a membrane-bound chaperone facilitating folding of translocated proteins. In Bos taurus (Bovine), this protein is Translocon-associated protein subunit alpha (SSR1).